The sequence spans 475 residues: Ribulose bisphosphate carboxylase large chain (475 aa).

A propeptide spanning residues Met-1–Ser-2 is cleaved from the precursor. Pro-3 bears the N-acetylproline mark. Position 14 is an N6,N6,N6-trimethyllysine (Lys-14). Residues Asn-123 and Thr-173 each coordinate substrate. The active-site Proton acceptor is Lys-175. A substrate-binding site is contributed by Lys-177. Residues Lys-201, Asp-203, and Glu-204 each coordinate Mg(2+). Lys-201 is modified (N6-carboxylysine). Residue His-294 is the Proton acceptor of the active site. Arg-295, His-327, and Ser-379 together coordinate substrate.

It belongs to the RuBisCO large chain family. Type I subfamily. As to quaternary structure, heterohexadecamer of 8 large chains and 8 small chains; disulfide-linked. The disulfide link is formed within the large subunit homodimers. It depends on Mg(2+) as a cofactor. The disulfide bond which can form in the large chain dimeric partners within the hexadecamer appears to be associated with oxidative stress and protein turnover.

It localises to the plastid. The protein localises to the chloroplast. The catalysed reaction is 2 (2R)-3-phosphoglycerate + 2 H(+) = D-ribulose 1,5-bisphosphate + CO2 + H2O. The enzyme catalyses D-ribulose 1,5-bisphosphate + O2 = 2-phosphoglycolate + (2R)-3-phosphoglycerate + 2 H(+). RuBisCO catalyzes two reactions: the carboxylation of D-ribulose 1,5-bisphosphate, the primary event in carbon dioxide fixation, as well as the oxidative fragmentation of the pentose substrate in the photorespiration process. Both reactions occur simultaneously and in competition at the same active site. This chain is Ribulose bisphosphate carboxylase large chain, found in Cycas taitungensis (Prince sago).